Reading from the N-terminus, the 339-residue chain is MWQLWASLCCLLALADARSRPSFHPLSDELVNYVNKRNTTWQAGHNFYNVDVSYLKKLCGTFLGGPKPPQRVMFTEDLKLPESFDAREQWPQCPTIKEIRDQGSCGSCWAFGAVEAISDRICIHTNAHVSVEVSAEDLLTCCGSMCGDGCNGGYPAEAWNFWTRKGLVSGGLYESHVGCRPYSIPPCEHHVNGSRPPCTGEGDTPKCSKICEPGYSPTYKQDKHYGYNSYSVSNSERDIMAEIYKNGPVEGAFSVYSDFLLYKSGVYQHVTGEMMGGHAIRILGWGVENGTPYWLVANSWNTDWGDNGFFKILRGQDHCGIESEVVAGIPRTDQYWEKI.

The first 17 residues, 1–17, serve as a signal peptide directing secretion; the sequence is MWQLWASLCCLLALADA. Positions 18–79 are cleaved as a propeptide — activation peptide; it reads RSRPSFHPLS…QRVMFTEDLK (62 aa). 6 disulfide bridges follow: C93–C122, C105–C150, C141–C207, C142–C146, C179–C211, and C187–C198. The active site involves C108. N-linked (GlcNAc...) asparagine glycosylation is present at N192. K220 carries the N6-acetyllysine modification. Catalysis depends on residues H278 and N298. The propeptide occupies 334 to 339; it reads QYWEKI.

This sequence belongs to the peptidase C1 family. As to quaternary structure, dimer of a heavy chain and a light chain cross-linked by a disulfide bond. Interacts with SRPX2. Directly interacts with SHKBP1.

Its subcellular location is the lysosome. The protein resides in the melanosome. The protein localises to the secreted. It is found in the extracellular space. It localises to the apical cell membrane. It carries out the reaction Hydrolysis of proteins with broad specificity for peptide bonds. Preferentially cleaves -Arg-Arg-|-Xaa bonds in small molecule substrates (thus differing from cathepsin L). In addition to being an endopeptidase, shows peptidyl-dipeptidase activity, liberating C-terminal dipeptides.. Its function is as follows. Thiol protease which is believed to participate in intracellular degradation and turnover of proteins. Cleaves matrix extracellular phosphoglycoprotein MEPE. Involved in the solubilization of cross-linked TG/thyroglobulin in the thyroid follicle lumen. Has also been implicated in tumor invasion and metastasis. This is Cathepsin B (CTSB) from Pongo abelii (Sumatran orangutan).